A 132-amino-acid polypeptide reads, in one-letter code: Histone H2A (132 aa).

Gly residues predominate over residues 1–10 (MTGGKSGGKA). Residues 1 to 24 (MTGGKSGGKASGSKNAQSRSSKAG) form a disordered region. N6-acetyllysine is present on residues lysine 5 and lysine 9. Glutamine 106 carries the post-translational modification N5-methylglutamine. At serine 129 the chain carries Phosphoserine. The [ST]-Q motif signature appears at 129 to 130 (SQ).

The protein belongs to the histone H2A family. The nucleosome is a histone octamer containing two molecules each of H2A, H2B, H3 and H4 assembled in one H3-H4 heterotetramer and two H2A-H2B heterodimers. The octamer wraps approximately 147 bp of DNA. In terms of processing, phosphorylated to form H2AS128ph (gamma-H2A) in response to DNA double-strand breaks (DSBs) generated by exogenous genotoxic agents and by stalled replication forks. Phosphorylation is dependent on the DNA damage checkpoint kinases mec1/ATR and tel1/ATM, spreads on either side of a detected DSB site and may mark the surrounding chromatin for recruitment of proteins required for DNA damage signaling and repair. Gamma-H2A is removed from the DNA prior to the strand invasion-primer extension step of the repair process and subsequently dephosphorylated. Dephosphorylation is necessary for efficient recovery from the DNA damage checkpoint. Acetylated by esa1 to form H2AK4ac and H2AK7ac.

The protein localises to the nucleus. It is found in the chromosome. Core component of nucleosome which plays a central role in DNA double strand break (DSB) repair. Nucleosomes wrap and compact DNA into chromatin, limiting DNA accessibility to the cellular machineries which require DNA as a template. Histones thereby play a central role in transcription regulation, DNA repair, DNA replication and chromosomal stability. DNA accessibility is regulated via a complex set of post-translational modifications of histones, also called histone code, and nucleosome remodeling. This Emericella nidulans (strain FGSC A4 / ATCC 38163 / CBS 112.46 / NRRL 194 / M139) (Aspergillus nidulans) protein is Histone H2A (htaA).